The chain runs to 134 residues: Small ribosomal subunit protein uS11 (134 aa).

It belongs to the universal ribosomal protein uS11 family. As to quaternary structure, part of the 30S ribosomal subunit. Interacts with proteins S7 and S18. Binds to IF-3.

Its function is as follows. Located on the platform of the 30S subunit, it bridges several disparate RNA helices of the 16S rRNA. Forms part of the Shine-Dalgarno cleft in the 70S ribosome. The chain is Small ribosomal subunit protein uS11 from Delftia acidovorans (strain DSM 14801 / SPH-1).